Here is a 432-residue protein sequence, read N- to C-terminus: Glutamate-1-semialdehyde 2,1-aminomutase 1 (432 aa).

Lys272 is modified (N6-(pyridoxal phosphate)lysine).

Belongs to the class-III pyridoxal-phosphate-dependent aminotransferase family. HemL subfamily. In terms of assembly, homodimer. The cofactor is pyridoxal 5'-phosphate.

The protein localises to the cytoplasm. It carries out the reaction (S)-4-amino-5-oxopentanoate = 5-aminolevulinate. Its pathway is porphyrin-containing compound metabolism; protoporphyrin-IX biosynthesis; 5-aminolevulinate from L-glutamyl-tRNA(Glu): step 2/2. The chain is Glutamate-1-semialdehyde 2,1-aminomutase 1 from Exiguobacterium sp. (strain ATCC BAA-1283 / AT1b).